A 104-amino-acid polypeptide reads, in one-letter code: DNA-directed RNA polymerase subunit omega (104 aa).

The protein belongs to the RNA polymerase subunit omega family. As to quaternary structure, the RNAP catalytic core consists of 2 alpha, 1 beta, 1 beta' and 1 omega subunit. When a sigma factor is associated with the core the holoenzyme is formed, which can initiate transcription.

The enzyme catalyses RNA(n) + a ribonucleoside 5'-triphosphate = RNA(n+1) + diphosphate. Its function is as follows. Promotes RNA polymerase assembly. Latches the N- and C-terminal regions of the beta' subunit thereby facilitating its interaction with the beta and alpha subunits. This Streptococcus agalactiae serotype Ia (strain ATCC 27591 / A909 / CDC SS700) protein is DNA-directed RNA polymerase subunit omega.